The following is a 558-amino-acid chain: TNF receptor-associated factor 5 (558 aa).

Residues 45 to 85 form an RING-type zinc finger; it reads CAFCHSVLHNPHQTGCGHRFCQQCIRSLRELNSVPICPVDK. 2 consecutive TRAF-type zinc fingers follow at residues 127–181 and 182–239; these read DHLQ…TNLQ and DHEE…GNLL. A coiled-coil region spans residues 252–302; it reads LVLEKNYQLEQRISDLYQSLEQKESKIQQLAETVKKFEKELKQFTQMFGRN. Residue K318 forms a Glycyl lysine isopeptide (Lys-Gly) (interchain with G-Cter in ubiquitin) linkage. Positions 340-400 form a coiled coil; sequence LDLRSLVDAV…EERFKQLEGA (61 aa). An interaction with EIF2AK2/PKR region spans residues 345 to 558; it reads LVDAVDSVKQ…AVDLTDLEDL (214 aa). Residues 403-550 form the MATH domain; it reads SGKLIWKVTD…DDTLFLKVAV (148 aa).

The protein belongs to the TNF receptor-associated factor family. A subfamily. As to quaternary structure, homotrimer. Heterotrimer with TRAF3. Associates with TNFRSF5/CD40 through interaction with TRAF3. Associates with LTBR/TNFRSF3, TNFRSF4, TNFRSF8/CD30, TNFRSF11A/RANK, TNFRSF13B/TACI, TNFRSF14, TNFRSF17, TNFRSF19/TROY, RIPK2, MAP3K14, MAP3K5, and TRAF and TNF receptor associated protein TDP2. Interacts (via C-terminus) with EIF2AK2/PKR (via the kinase catalytic domain). Post-translationally, ubiquitinated at Lys-318 by the SCF(FBXL2) complex, leading to its degradation by the proteasome.

It localises to the cytoplasm. It is found in the cytosol. Functionally, adapter protein and signal transducer that links members of the tumor necrosis factor receptor family to different signaling pathways by association with the receptor cytoplasmic domain and kinases. Mediates activation of NF-kappa-B and probably JNK. Seems to be involved in apoptosis. Plays a role in mediating activation of NF-kappa-B by EIF2AK2/PKR. The chain is TNF receptor-associated factor 5 (Traf5) from Mus musculus (Mouse).